Consider the following 358-residue polypeptide: Probable butyrate kinase (358 aa).

It belongs to the acetokinase family.

The protein resides in the cytoplasm. It catalyses the reaction butanoate + ATP = butanoyl phosphate + ADP. This is Probable butyrate kinase from Oceanobacillus iheyensis (strain DSM 14371 / CIP 107618 / JCM 11309 / KCTC 3954 / HTE831).